We begin with the raw amino-acid sequence, 259 residues long: Ribosome maturation factor RimP (259 aa).

Positions 198-259 (SLGLAPEPPP…RGEIDTSEGD (62 aa)) are disordered. A compositionally biased stretch (basic and acidic residues) spans 243–253 (LAADKARRGEI).

It belongs to the RimP family.

It localises to the cytoplasm. Its function is as follows. Required for maturation of 30S ribosomal subunits. The polypeptide is Ribosome maturation factor RimP (Rhodopseudomonas palustris (strain TIE-1)).